Here is a 310-residue protein sequence, read N- to C-terminus: Olfactory receptor 2A7 (310 aa).

The Extracellular segment spans residues 1–24 (MGNNMTLITEFILLGFPLSPRMQM). N-linked (GlcNAc...) asparagine glycosylation occurs at N4. Residues 25-45 (LLFALFSLFYAFTLLGNGTIV) traverse the membrane as a helical segment. Residues 46-53 (GLICLDSR) are Cytoplasmic-facing. A helical membrane pass occupies residues 54 to 74 (LHTPMYFFLSHLAIVDIAYAC). Residues 75 to 96 (NTVPQMLVNLLDPVKPISYAGC) are Extracellular-facing. C96 and C178 are oxidised to a cystine. The helical transmembrane segment at 97-117 (MTQTFLFLTFAITECLLLVVM) threads the bilayer. At 118–148 (SYDRYVAICHPLRYSAIMSWRVCSTMAVTSW) the chain is on the cytoplasmic side. A helical membrane pass occupies residues 149 to 169 (IIGVLLSLIHLVLLLPLPFCV). Residues 170–204 (SQKVNHFFCEITAILKLACADTHLNETMVLAGAVS) are Extracellular-facing. A glycan (N-linked (GlcNAc...) asparagine) is linked at N194. The helical transmembrane segment at 205–225 (VLVGPFSSIVVSYACILGAIL) threads the bilayer. The Cytoplasmic portion of the chain corresponds to 226-239 (KIQSEEGQRKAFST). A helical membrane pass occupies residues 240–260 (CSSHLCVVGLFYGTAIVMYVG). Topologically, residues 261–273 (PRHGSPKEQKKYL) are extracellular. A helical membrane pass occupies residues 274–291 (LLFHSLFNPMLNPLIYSL). Topologically, residues 292–310 (RNSDVKNTLKRVLRTQRAL) are cytoplasmic.

It belongs to the G-protein coupled receptor 1 family. As to expression, olfactory epithelium.

Its subcellular location is the cell membrane. Functionally, odorant receptor. In Mus musculus (Mouse), this protein is Olfactory receptor 2A7.